We begin with the raw amino-acid sequence, 179 residues long: Inner membrane-spanning protein YciB (179 aa).

5 consecutive transmembrane segments (helical) span residues 3-23 (FLYD…FGIY), 49-69 (NALI…LWLQ), 76-96 (WKPT…QWLF), 119-139 (LNLA…YVAY), and 149-169 (FKLF…TLLL).

The protein belongs to the YciB family.

The protein resides in the cell inner membrane. Functionally, plays a role in cell envelope biogenesis, maintenance of cell envelope integrity and membrane homeostasis. The protein is Inner membrane-spanning protein YciB of Methylobacillus flagellatus (strain ATCC 51484 / DSM 6875 / VKM B-1610 / KT).